A 319-amino-acid polypeptide reads, in one-letter code: MRQDKPGVLLVNLGTPDAPTTSAVKRYLKQFLSDKRVVDAPRWLWWPLLNFGILPIRSPRVSKLYASVWMDEGSPLMVYSQRQRNALAARLDMPVALGMSYGNPSLKSAIDSLMAEGVTRLIVLPLYPQFSCSTVAAVWDGITQVFAGYRSLPSVHFIRDYAQHPAYIAALKASVERSFAQHGKPDLLVTSFHGIPQRFADEGDDYPQRCYETFEALKASLGLGDDEAMLTFQSRFGREPWLMPYTDKTMESLPGKGVKHVQIMSPGFASDCLETLEEIDGENREIFLHAGGTRFEYIPALNDDEAHITMMLELVNQYR.

His193 and Glu274 together coordinate Fe cation.

This sequence belongs to the ferrochelatase family.

The protein localises to the cytoplasm. It carries out the reaction heme b + 2 H(+) = protoporphyrin IX + Fe(2+). Its pathway is porphyrin-containing compound metabolism; protoheme biosynthesis; protoheme from protoporphyrin-IX: step 1/1. Catalyzes the ferrous insertion into protoporphyrin IX. The polypeptide is Ferrochelatase (Erwinia tasmaniensis (strain DSM 17950 / CFBP 7177 / CIP 109463 / NCPPB 4357 / Et1/99)).